We begin with the raw amino-acid sequence, 186 residues long: A-type ATP synthase subunit E (186 aa).

Belongs to the V-ATPase E subunit family. As to quaternary structure, has multiple subunits with at least A(3), B(3), C, D, E, F, H, I and proteolipid K(x).

The protein localises to the cell membrane. In terms of biological role, component of the A-type ATP synthase that produces ATP from ADP in the presence of a proton gradient across the membrane. This chain is A-type ATP synthase subunit E, found in Methanocella arvoryzae (strain DSM 22066 / NBRC 105507 / MRE50).